A 217-amino-acid chain; its full sequence is Somatotropin (217 aa).

The signal sequence occupies residues 1–26 (MMAAGPRTSLLLAFALLCLPWTQVVG). Histidine 46 serves as a coordination point for Zn(2+). The cysteines at positions 79 and 190 are disulfide-linked. Serine 132 carries the phosphoserine modification. Glutamate 199 is a binding site for Zn(2+). A disulfide bridge links cysteine 207 with cysteine 215.

This sequence belongs to the somatotropin/prolactin family.

The protein resides in the secreted. Its function is as follows. Plays an important role in growth control. Its major role in stimulating body growth is to stimulate the liver and other tissues to secrete IGF1. It stimulates both the differentiation and proliferation of myoblasts. It also stimulates amino acid uptake and protein synthesis in muscle and other tissues. The polypeptide is Somatotropin (GH1) (Bos taurus (Bovine)).